The primary structure comprises 158 residues: Regulator of sigma D (158 aa).

Belongs to the Rsd/AlgQ family. As to quaternary structure, interacts with RpoD.

Its subcellular location is the cytoplasm. Functionally, binds RpoD and negatively regulates RpoD-mediated transcription activation by preventing the interaction between the primary sigma factor RpoD with the catalytic core of the RNA polymerase and with promoter DNA. May be involved in replacement of the RNA polymerase sigma subunit from RpoD to RpoS during the transition from exponential growth to the stationary phase. The polypeptide is Regulator of sigma D (Escherichia coli (strain SMS-3-5 / SECEC)).